A 92-amino-acid chain; its full sequence is Tachykinin-2 (92 aa).

The first 22 residues, 1 to 22, serve as a signal peptide directing secretion; that stretch reads MIRVGLILCCIFIVGVFEASSA. Positions 23–37 are excised as a propeptide; the sequence is DDILTAHNLIKRSEV. Position 49 is a methionine amide (Met49). Positions 52–92 are excised as a propeptide; sequence SEELTRRLIQHPGSMSETSKRGPPKKGDFNPNELKPESNIC. Positions 61–92 are disordered; the sequence is QHPGSMSETSKRGPPKKGDFNPNELKPESNIC.

This sequence belongs to the tachykinin family. In terms of tissue distribution, expressed in the posterior salivary gland and more specifically in the mucus-secreting gland cells.

The protein resides in the secreted. Its function is as follows. Tachykinins are active peptides which excite neurons, evoke behavioral responses, are potent vasodilators and secretagogues, and contract (directly or indirectly) many smooth muscles. The protein is Tachykinin-2 of Octopus vulgaris (Common octopus).